The following is a 326-amino-acid chain: Fructose-1,6-bisphosphatase class 1 (326 aa).

The protein belongs to the FBPase class 1 family. As to quaternary structure, homotetramer.

The protein resides in the cytoplasm. The catalysed reaction is beta-D-fructose 1,6-bisphosphate + H2O = beta-D-fructose 6-phosphate + phosphate. The protein operates within carbohydrate biosynthesis; gluconeogenesis. This Methylobacterium sp. (strain 4-46) protein is Fructose-1,6-bisphosphatase class 1.